Reading from the N-terminus, the 466-residue chain is Soluble pyridine nucleotide transhydrogenase (466 aa).

36–45 (EKESSVGGGC) lines the FAD pocket.

The protein belongs to the class-I pyridine nucleotide-disulfide oxidoreductase family. The cofactor is FAD.

It localises to the cytoplasm. The enzyme catalyses NAD(+) + NADPH = NADH + NADP(+). Its function is as follows. Conversion of NADPH, generated by peripheral catabolic pathways, to NADH, which can enter the respiratory chain for energy generation. The polypeptide is Soluble pyridine nucleotide transhydrogenase (Vibrio vulnificus (strain CMCP6)).